A 276-amino-acid polypeptide reads, in one-letter code: Secretagogin (276 aa).

6 consecutive EF-hand domains span residues 12–47, 58–93, 105–140, 149–184, 197–232, and 240–276; these read LDAACFWQIWQRFDKEEKGYIRETELDAFFDHLLAK, NVQKVKEQLMTSHNVSKEGRILMKELASMFLSEDEN, DNSVEFMQIWRKYDADSSGFISAAELCNFLRDLFLH, ELEEYTSTMMKIFDKNKDGRLDLNDLARILALQENF, ERKRDFEKIFAHYDVSKTGALEGPEVDGFVKDMMEL, and VDLDKFREILLRHCDVNKDGKIQKSELALCLGLKINP. 25 residues coordinate Ca(2+): Asp-25, Tyr-31, Glu-36, Ser-73, Glu-75, Arg-77, Glu-82, Asp-118, Asp-120, Ser-122, Glu-129, Asp-162, Asn-164, Asp-166, Arg-168, Asp-173, Asp-210, Ser-212, Thr-214, Glu-221, Asp-254, Asn-256, Asp-258, Lys-260, and Glu-265.

It is found in the cytoplasm. The protein localises to the secreted. Its subcellular location is the cytoplasmic vesicle. The protein resides in the secretory vesicle membrane. The protein is Secretagogin (Scgn) of Mus musculus (Mouse).